The following is an 89-amino-acid chain: Small ribosomal subunit protein uS15 (89 aa).

The segment covering 1-21 (MALSPEKKNEIIENFKTHEGD) has biased composition (basic and acidic residues). Residues 1 to 23 (MALSPEKKNEIIENFKTHEGDTG) form a disordered region.

The protein belongs to the universal ribosomal protein uS15 family. In terms of assembly, part of the 30S ribosomal subunit. Forms a bridge to the 50S subunit in the 70S ribosome, contacting the 23S rRNA.

Functionally, one of the primary rRNA binding proteins, it binds directly to 16S rRNA where it helps nucleate assembly of the platform of the 30S subunit by binding and bridging several RNA helices of the 16S rRNA. In terms of biological role, forms an intersubunit bridge (bridge B4) with the 23S rRNA of the 50S subunit in the ribosome. The chain is Small ribosomal subunit protein uS15 from Desulforamulus reducens (strain ATCC BAA-1160 / DSM 100696 / MI-1) (Desulfotomaculum reducens).